Reading from the N-terminus, the 237-residue chain is Phosphoribosylaminoimidazole-succinocarboxamide synthase (237 aa).

Belongs to the SAICAR synthetase family.

It catalyses the reaction 5-amino-1-(5-phospho-D-ribosyl)imidazole-4-carboxylate + L-aspartate + ATP = (2S)-2-[5-amino-1-(5-phospho-beta-D-ribosyl)imidazole-4-carboxamido]succinate + ADP + phosphate + 2 H(+). Its pathway is purine metabolism; IMP biosynthesis via de novo pathway; 5-amino-1-(5-phospho-D-ribosyl)imidazole-4-carboxamide from 5-amino-1-(5-phospho-D-ribosyl)imidazole-4-carboxylate: step 1/2. The sequence is that of Phosphoribosylaminoimidazole-succinocarboxamide synthase from Photorhabdus laumondii subsp. laumondii (strain DSM 15139 / CIP 105565 / TT01) (Photorhabdus luminescens subsp. laumondii).